We begin with the raw amino-acid sequence, 66 residues long: Large ribosomal subunit protein bL35 (66 aa).

Belongs to the bacterial ribosomal protein bL35 family.

This Lysinibacillus sphaericus (strain C3-41) protein is Large ribosomal subunit protein bL35.